The primary structure comprises 296 residues: Pseudouridine-5'-phosphate glycosidase (296 aa).

Residue Glu-21 is the Proton donor of the active site. Residues Lys-81 and Val-101 each contribute to the substrate site. Asp-130 is a binding site for Mn(2+). 132–134 contributes to the substrate binding site; that stretch reads SQD. The active-site Nucleophile is the Lys-151.

The protein belongs to the pseudouridine-5'-phosphate glycosidase family. As to quaternary structure, homotrimer. Mn(2+) is required as a cofactor.

It carries out the reaction D-ribose 5-phosphate + uracil = psi-UMP + H2O. Functionally, catalyzes the reversible cleavage of pseudouridine 5'-phosphate (PsiMP) to ribose 5-phosphate and uracil. Functions biologically in the cleavage direction, as part of a pseudouridine degradation pathway. This is Pseudouridine-5'-phosphate glycosidase from Fervidobacterium nodosum (strain ATCC 35602 / DSM 5306 / Rt17-B1).